The following is a 389-amino-acid chain: MGQNLSTSNPLGFFPDHQLDPAFRANTNNPDWDFNPNKDTWPDANKVGAGAFGLGFTPPHGGLLGWSPQAQGIMQTLPANPPPASTNRQSGRQPTPLSPPLRTTHPQAMHWNSTTFHQTLQDPRVRGLYFPAGGSSSGTVNPVPTTTSPISSIFSRIGDPALNMENITSGFLGPLLVLQAGFFLLTRILTIPQSLDSWWTSLNFLGGTTVCLGQNSQSPISNHSPTSCPPTCPGYRWMCLRRFIIFLFILLLCLIFLLVLLDYQGMLPVCPLIPGSSTTSTGSCRTCTTPAQGISMYPSCCCTKPSDGNCTCIPIPSSWAFGKFLWEWASARFSWLSLLVPFVQWFVGLSPIVWLSVIWMMWYWGPSLYSILSPFLPLLPIFFCLWAYI.

Met-1 bears the N-acetylmethionine mark. A lipid anchor (N-myristoyl glycine; by host) is attached at Gly-2. The segment at 2–108 (GQNLSTSNPL…PPLRTTHPQA (107 aa)) is pre-S1. A pre-S region spans residues 2–163 (GQNLSTSNPL…FSRIGDPALN (162 aa)). Residues 2–170 (GQNLSTSNPL…ALNMENITSG (169 aa)) are Virion surface; in external conformation-facing. Residues 2 to 242 (GQNLSTSNPL…PGYRWMCLRR (241 aa)) are Intravirion; in internal conformation-facing. A disordered region spans residues 76-102 (TLPANPPPASTNRQSGRQPTPLSPPLR). Positions 85–95 (STNRQSGRQPT) are enriched in polar residues. A pre-S2 region spans residues 109-163 (MHWNSTTFHQTLQDPRVRGLYFPAGGSSSGTVNPVPTTTSPISSIFSRIGDPALN). A helical membrane pass occupies residues 171–191 (FLGPLLVLQAGFFLLTRILTI). Topologically, residues 192-242 (PQSLDSWWTSLNFLGGTTVCLGQNSQSPISNHSPTSCPPTCPGYRWMCLRR) are intravirion; in external conformation. Residues 243-263 (FIIFLFILLLCLIFLLVLLDY) form a helical membrane-spanning segment. Over 264 to 337 (QGMLPVCPLI…WASARFSWLS (74 aa)) the chain is Virion surface. Residue Asn-309 is glycosylated (N-linked (GlcNAc...) asparagine; by host). The chain crosses the membrane as a helical span at residues 338-358 (LLVPFVQWFVGLSPIVWLSVI). Over 359–364 (WMMWYW) the chain is Intravirion. A helical membrane pass occupies residues 365–387 (GPSLYSILSPFLPLLPIFFCLWA). The Virion surface segment spans residues 388–389 (YI).

It belongs to the orthohepadnavirus major surface antigen family. As to quaternary structure, in its internal form (Li-HBsAg), interacts with the capsid protein and with the isoform S. Interacts with host chaperone CANX. In terms of assembly, associates with host chaperone CANX through its pre-S2 N glycan; this association may be essential for isoform M proper secretion. Interacts with isoform L. Interacts with the antigens of satellite virus HDV (HDVAgs); this interaction is required for encapsidation of HDV genomic RNA. In terms of processing, isoform M is N-terminally acetylated by host at a ratio of 90%, and N-glycosylated by host at the pre-S2 region. Myristoylated.

It localises to the virion membrane. Its function is as follows. The large envelope protein exists in two topological conformations, one which is termed 'external' or Le-HBsAg and the other 'internal' or Li-HBsAg. In its external conformation the protein attaches the virus to cell receptors and thereby initiating infection. This interaction determines the species specificity and liver tropism. This attachment induces virion internalization predominantly through caveolin-mediated endocytosis. The large envelope protein also assures fusion between virion membrane and endosomal membrane. In its internal conformation the protein plays a role in virion morphogenesis and mediates the contact with the nucleocapsid like a matrix protein. The middle envelope protein plays an important role in the budding of the virion. It is involved in the induction of budding in a nucleocapsid independent way. In this process the majority of envelope proteins bud to form subviral lipoprotein particles of 22 nm of diameter that do not contain a nucleocapsid. The protein is Large envelope protein of Hepatitis B virus genotype D subtype adw (isolate United Kingdom/adyw/1979) (HBV-D).